We begin with the raw amino-acid sequence, 1213 residues long: uncharacterized protein (1213 aa).

One can recognise a PH domain in the interval Ala-289–Glu-390. Positions Leu-776 to Arg-945 constitute a VASt domain. 2 consecutive transmembrane segments (helical) span residues Leu-996–Phe-1016 and Phe-1025–Gly-1045.

It is found in the cytoplasm. The protein resides in the nucleus membrane. Its subcellular location is the cytoskeleton. The protein localises to the microtubule organizing center. It localises to the spindle pole body. This is an uncharacterized protein from Schizosaccharomyces pombe (strain 972 / ATCC 24843) (Fission yeast).